We begin with the raw amino-acid sequence, 447 residues long: Serine/threonine-protein phosphatase 2A 55 kDa regulatory subunit B gamma isoform (447 aa).

7 WD repeats span residues 22–61 (TEAD…KNAP), 87–128 (EIEE…KRPE), 171–209 (GHTY…RSFN), 220–260 (DLTE…LCDK), 279–317 (EIIS…RPIE), 334–375 (ENDC…DVTL), and 410–446 (DFTK…NSDV).

The protein belongs to the phosphatase 2A regulatory subunit B family. In terms of assembly, PP2A consists of a common heterodimeric core enzyme, composed of a 36 kDa catalytic subunit (subunit C) and a 65 kDa constant regulatory subunit (PR65 or subunit A), that associates with a variety of regulatory subunits. Proteins that associate with the core dimer include three families of regulatory subunits B (the R2/B/PR55/B55, R3/B''/PR72/PR130/PR59 and R5/B'/B56 families), the 48 kDa variable regulatory subunit, viral proteins, and cell signaling molecules. Interacts with IER5. Highly expressed in brain.

The B regulatory subunit might modulate substrate selectivity and catalytic activity, and might also direct the localization of the catalytic enzyme to a particular subcellular compartment. In Oryctolagus cuniculus (Rabbit), this protein is Serine/threonine-protein phosphatase 2A 55 kDa regulatory subunit B gamma isoform (PPP2R2C).